Here is a 557-residue protein sequence, read N- to C-terminus: Ras-specific guanine nucleotide-releasing factor RalGPS2 (557 aa).

The 239-residue stretch at 49 to 287 folds into the Ras-GEF domain; that stretch reads TPEEYAGQIT…YKLSLKIEPG (239 aa). Residues 283 to 314 are disordered; sequence KIEPGTSTPRSAASREDLVGPEVGASPQSGRK. A phosphoserine mark is found at Ser-293, Ser-296, Ser-308, and Ser-311. Thr-326 is subject to Phosphothreonine. Residues 327–330 carry the PXXP motif; sequence PPSP. A phosphoserine mark is found at Ser-329 and Ser-343. A Phosphothreonine modification is found at Thr-361. Residues 368–409 form a disordered region; it reads RHLLDDSVMEPHAPSRGQAESSTLSSGISIGSSDGSELSEET. A Phosphoserine modification is found at Ser-374. Over residues 387 to 403 the composition is skewed to low complexity; sequence ESSTLSSGISIGSSDGS. One can recognise a PH domain in the interval 431 to 543; the sequence is AVTIQGVLRR…WFKHLSAACQ (113 aa). Positions 433–557 are required for stimulation of nucleotide exchange by RALA; that stretch reads TIQGVLRRKT…QVPTNLMTFE (125 aa).

As to quaternary structure, interacts with the SH3 domains of GRB2 and PLCG1. Interacts with RALA.

The protein localises to the cytoplasm. The protein resides in the cell membrane. Its function is as follows. Guanine nucleotide exchange factor for the small GTPase RALA. May be involved in cytoskeletal organization. May also be involved in the stimulation of transcription in a Ras-independent fashion. This chain is Ras-specific guanine nucleotide-releasing factor RalGPS2 (RALGPS2), found in Macaca fascicularis (Crab-eating macaque).